The sequence spans 444 residues: Phosphoglucosamine mutase (444 aa).

The active-site Phosphoserine intermediate is S103. 4 residues coordinate Mg(2+): S103, D242, D244, and D246. S103 is modified (phosphoserine).

It belongs to the phosphohexose mutase family. Mg(2+) is required as a cofactor. Activated by phosphorylation.

It carries out the reaction alpha-D-glucosamine 1-phosphate = D-glucosamine 6-phosphate. Its function is as follows. Catalyzes the conversion of glucosamine-6-phosphate to glucosamine-1-phosphate. The protein is Phosphoglucosamine mutase of Hydrogenovibrio crunogenus (strain DSM 25203 / XCL-2) (Thiomicrospira crunogena).